Consider the following 542-residue polypeptide: Importin subunit alpha (542 aa).

At Met-1 the chain carries N-acetylmethionine. Residues Met-1–Lys-11 are compositionally biased toward polar residues. In terms of domain architecture, IBB spans Met-1–Ala-65. Residues Met-1–Ala-77 are disordered. A compositionally biased stretch (basic and acidic residues) spans Phe-27–Ala-53. The stretch at Leu-89–Pro-122 is one ARM 1; truncated repeat. ARM repeat units lie at residues Ile-123 to Thr-162, Ser-163 to Ser-204, Thr-205 to Asp-251, Trp-252 to Pro-288, Gln-289 to Asn-330, Asp-331 to Asn-372, Thr-373 to Arg-417, and Pro-418 to Asn-471. The tract at residues Asp-209–Gln-335 is NLS binding site 1. The segment at Asp-419–Ile-505 is NLS binding site 2. One copy of the ARM 10; atypical repeat lies at Glu-472–Tyr-508.

This sequence belongs to the importin alpha family. Forms a complex with an importin beta subunit. In the nucleus, interacts with NUP2 which accelerate release of NLSs, NUP2 is subsequently displaced by CSE1:RanGTP which mediates re-export and recycling. Interacts with HEH2, SHE2, and STS1.

Its subcellular location is the cytoplasm. It is found in the perinuclear region. In terms of biological role, functions in nuclear protein import as an adapter protein for importin beta nuclear receptors. Binds specifically and directly to substrates containing either a simple or bipartite NLS motif. Promotes docking of import substrates to the nuclear envelope. Together with importin beta KAP95, mediates nuclear import of transcription factor GCN4. Together with tethering factor STS1, targets the proteasome to the nucleus. This Saccharomyces cerevisiae (strain ATCC 204508 / S288c) (Baker's yeast) protein is Importin subunit alpha (SRP1).